We begin with the raw amino-acid sequence, 293 residues long: 4-hydroxy-tetrahydrodipicolinate synthase (293 aa).

Position 45 (threonine 45) interacts with pyruvate. Catalysis depends on tyrosine 133, which acts as the Proton donor/acceptor. Lysine 161 functions as the Schiff-base intermediate with substrate in the catalytic mechanism. Isoleucine 204 is a pyruvate binding site.

Belongs to the DapA family. Homotetramer; dimer of dimers.

It localises to the cytoplasm. The catalysed reaction is L-aspartate 4-semialdehyde + pyruvate = (2S,4S)-4-hydroxy-2,3,4,5-tetrahydrodipicolinate + H2O + H(+). The protein operates within amino-acid biosynthesis; L-lysine biosynthesis via DAP pathway; (S)-tetrahydrodipicolinate from L-aspartate: step 3/4. In terms of biological role, catalyzes the condensation of (S)-aspartate-beta-semialdehyde [(S)-ASA] and pyruvate to 4-hydroxy-tetrahydrodipicolinate (HTPA). The chain is 4-hydroxy-tetrahydrodipicolinate synthase from Yersinia pseudotuberculosis serotype I (strain IP32953).